A 262-amino-acid chain; its full sequence is Glutamate racemase (262 aa).

Substrate is bound by residues 10–11 (DS) and 42–43 (FG). The active-site Proton donor/acceptor is cysteine 74. 75-76 (NT) contacts substrate. The active-site Proton donor/acceptor is the cysteine 189. Position 190 to 191 (190 to 191 (TH)) interacts with substrate.

Belongs to the aspartate/glutamate racemases family.

The enzyme catalyses L-glutamate = D-glutamate. The protein operates within cell wall biogenesis; peptidoglycan biosynthesis. Provides the (R)-glutamate required for cell wall biosynthesis. The chain is Glutamate racemase from Mesorhizobium japonicum (strain LMG 29417 / CECT 9101 / MAFF 303099) (Mesorhizobium loti (strain MAFF 303099)).